Consider the following 254-residue polypeptide: Major prion protein (254 aa).

An N-terminal signal peptide occupies residues 1 to 22 (MANLGYWLLALFVTMWTDVGLC). Positions 23-38 (KKRPKPGGWNTGGSRY) are interaction with ADGRG6. An interaction with GRB2, ERI3 and SYN1 region spans residues 23-231 (KKRPKPGGWN…QAYYDGRRSS (209 aa)). The tract at residues 25-104 (RPKPGGWNTG…HNQWNKPSKP (80 aa)) is disordered. P44 carries the hydroxyproline modification. Repeat copies occupy residues 51 to 58 (PQGGTWGQ), 59 to 66 (PHGGGWGQ), 67 to 74 (PHGGSWGQ), 75 to 82 (PHGGSWGQ), and 83 to 90 (PHGGGWGQ). The tract at residues 51–90 (PQGGTWGQPHGGGWGQPHGGSWGQPHGGSWGQPHGGGWGQ) is 5 X 8 AA tandem repeats of P-H-G-G-G-W-G-Q. The segment covering 54 to 94 (GTWGQPHGGGWGQPHGGSWGQPHGGSWGQPHGGGWGQGGGT) has biased composition (gly residues). Residues H60, G61, G62, H68, G69, G70, H76, G77, G78, H84, G85, and G86 each coordinate Cu(2+). A disulfide bridge connects residues C178 and C213. N-linked (GlcNAc...) asparagine glycans are attached at residues N180 and N196. Residue S230 is the site of GPI-anchor amidated serine attachment. A propeptide spans 231–254 (SSTVLFSSPPVILLISFLIFLIVG) (removed in mature form).

This sequence belongs to the prion family. In terms of assembly, monomer and homodimer. Has a tendency to aggregate into amyloid fibrils containing a cross-beta spine, formed by a steric zipper of superposed beta-strands. Soluble oligomers may represent an intermediate stage on the path to fibril formation. Copper binding may promote oligomerization. Interacts with GRB2, APP, ERI3/PRNPIP and SYN1. Mislocalized cytosolically exposed PrP interacts with MGRN1; this interaction alters MGRN1 subcellular location and causes lysosomal enlargement. Interacts with APP. Interacts with KIAA1191. Interacts with ADGRG6. In terms of processing, N-glycosylated. In terms of tissue distribution, highly expressed in the brain, lung, kidney and heart. Expressed at low levels in the liver and spleen.

It is found in the cell membrane. Its subcellular location is the golgi apparatus. Its function is as follows. Its primary physiological function is unclear. May play a role in neuronal development and synaptic plasticity. May be required for neuronal myelin sheath maintenance. May promote myelin homeostasis through acting as an agonist for ADGRG6 receptor. May play a role in iron uptake and iron homeostasis. Soluble oligomers are toxic to cultured neuroblastoma cells and induce apoptosis (in vitro). Association with GPC1 (via its heparan sulfate chains) targets PRNP to lipid rafts. Also provides Cu(2+) or Zn(2+) for the ascorbate-mediated GPC1 deaminase degradation of its heparan sulfate side chains. This Mus musculus (Mouse) protein is Major prion protein (Prnp).